We begin with the raw amino-acid sequence, 861 residues long: MQQQYNPSAIEPKVQQFWAENKVFKAVKDVTKEKYYCLSMLPYPSGKLHMGHVRNYTIGDVVSRYQRMIGKNVLQPMGWDAFGLPAEGAAVKNNTAPAKWTYENIEYMKGQLKMLGFSYDWDREVTTCRPEYYKWEQWFFTELYKKGLVYKKTSTVNWCPNDATVLANEQVHEGCCWRCDTPVEQREIPQWFIKITDYAEELLTHLDNLPQWPDQVKTMQRNWIGRSEGVEITFKIAGSNAELPVYTTRPDTFFGVSYVAIAAAHPLAEMAAENNPALAEFIREAKNTKVAEAELATMEKKGMATGLFAIHPLTGKEVPVWVANFVLMHYGTGAVMAVPAHDERDFEFAQKYGLQINQVIQPLDGSEWDFSKAAYTEHGKLINSAEFDDLNFEQAFNAIADKLESMKVGKRQVNFRLRDWGVSRQRYWGAPIPMMTTEDGEVVTVPMQDLPVILPEDVVMNGVQSPIKADPEWAKTTYNGKPALKETDTFDTFMESSWYYARYTCPQYHEGMLDSDEANYWLPVDQYIGGIEHATMHLLYFRFFHKLLRDAGILNSDEPATKLLCQGMVLADAFYYTSPTNERIWVSPTQVTLERDEKGRIIKATDPEGRELVHSGMTKMSKSKNNGIDPQEMVEKYGADTVRLFMMFASPAEMTLEWQESGVEGAKRFLGRVWNLVYEYSQNPATAALDVAALSKAQKELRRDVHKTIAKVSDDIGRRQTFNTAIAAIMELMNKLTKAPLENEQDKAVMAEALSAVVRMLYPITPHICFELWQALGNNDTIDFAPWVVADESAMVEDEKLVVVQVNGKVRGKVTVSATATEDEVKAIAKADANVAKFLEGVEIVKEIYVPYKMLSFAVKA.

The short motif at 42–52 (PYPSGKLHMGH) is the 'HIGH' region element. Positions 619–623 (KMSKS) match the 'KMSKS' region motif. An ATP-binding site is contributed by Lys622.

This sequence belongs to the class-I aminoacyl-tRNA synthetase family.

It localises to the cytoplasm. It carries out the reaction tRNA(Leu) + L-leucine + ATP = L-leucyl-tRNA(Leu) + AMP + diphosphate. In Actinobacillus pleuropneumoniae serotype 5b (strain L20), this protein is Leucine--tRNA ligase.